A 493-amino-acid polypeptide reads, in one-letter code: ATP synthase subunit beta, chloroplastic (493 aa).

170–177 (GGAGVGKT) is a binding site for ATP.

It belongs to the ATPase alpha/beta chains family. In terms of assembly, F-type ATPases have 2 components, CF(1) - the catalytic core - and CF(0) - the membrane proton channel. CF(1) has five subunits: alpha(3), beta(3), gamma(1), delta(1), epsilon(1). CF(0) has four main subunits: a(1), b(1), b'(1) and c(9-12).

Its subcellular location is the plastid. It is found in the chloroplast thylakoid membrane. The enzyme catalyses ATP + H2O + 4 H(+)(in) = ADP + phosphate + 5 H(+)(out). Produces ATP from ADP in the presence of a proton gradient across the membrane. The catalytic sites are hosted primarily by the beta subunits. The chain is ATP synthase subunit beta, chloroplastic from Lachenalia pusilla (Cape cowslips).